The following is a 217-amino-acid chain: Large ribosomal subunit protein uL3 (217 aa).

A disordered region spans residues 131–155 (FSSSRASHGNSRSHNVPGSIGMAQD). The segment covering 132–145 (SSSRASHGNSRSHN) has biased composition (low complexity). At glutamine 154 the chain carries N5-methylglutamine.

This sequence belongs to the universal ribosomal protein uL3 family. Part of the 50S ribosomal subunit. Forms a cluster with proteins L14 and L19. Post-translationally, methylated by PrmB.

Its function is as follows. One of the primary rRNA binding proteins, it binds directly near the 3'-end of the 23S rRNA, where it nucleates assembly of the 50S subunit. This Nitrosomonas eutropha (strain DSM 101675 / C91 / Nm57) protein is Large ribosomal subunit protein uL3.